Reading from the N-terminus, the 302-residue chain is 33 kDa chaperonin (302 aa).

2 cysteine pairs are disulfide-bonded: cysteine 234–cysteine 236 and cysteine 267–cysteine 270.

Belongs to the HSP33 family. In terms of processing, under oxidizing conditions two disulfide bonds are formed involving the reactive cysteines. Under reducing conditions zinc is bound to the reactive cysteines and the protein is inactive.

Its subcellular location is the cytoplasm. Functionally, redox regulated molecular chaperone. Protects both thermally unfolding and oxidatively damaged proteins from irreversible aggregation. Plays an important role in the bacterial defense system toward oxidative stress. The chain is 33 kDa chaperonin from Neisseria gonorrhoeae (strain NCCP11945).